Reading from the N-terminus, the 253-residue chain is Methionine aminopeptidase (253 aa).

H78 serves as a coordination point for substrate. A divalent metal cation is bound by residues D95, D106, and H169. Substrate is bound at residue H176. The a divalent metal cation site is built by E206 and E237.

The protein belongs to the peptidase M24A family. Methionine aminopeptidase type 1 subfamily. Monomer. Co(2+) serves as cofactor. It depends on Zn(2+) as a cofactor. The cofactor is Mn(2+). Requires Fe(2+) as cofactor.

The catalysed reaction is Release of N-terminal amino acids, preferentially methionine, from peptides and arylamides.. In terms of biological role, removes the N-terminal methionine from nascent proteins. The N-terminal methionine is often cleaved when the second residue in the primary sequence is small and uncharged (Met-Ala-, Cys, Gly, Pro, Ser, Thr, or Val). Requires deformylation of the N(alpha)-formylated initiator methionine before it can be hydrolyzed. The protein is Methionine aminopeptidase of Helicobacter pylori (strain J99 / ATCC 700824) (Campylobacter pylori J99).